The primary structure comprises 240 residues: Phosphoribosyl isomerase A (240 aa).

The active-site Proton acceptor is the Asp11. Asp130 acts as the Proton donor in catalysis.

Belongs to the HisA/HisF family. Monomer.

It localises to the cytoplasm. The enzyme catalyses 1-(5-phospho-beta-D-ribosyl)-5-[(5-phospho-beta-D-ribosylamino)methylideneamino]imidazole-4-carboxamide = 5-[(5-phospho-1-deoxy-D-ribulos-1-ylimino)methylamino]-1-(5-phospho-beta-D-ribosyl)imidazole-4-carboxamide. It catalyses the reaction N-(5-phospho-beta-D-ribosyl)anthranilate = 1-(2-carboxyphenylamino)-1-deoxy-D-ribulose 5-phosphate. Its pathway is amino-acid biosynthesis; L-histidine biosynthesis; L-histidine from 5-phospho-alpha-D-ribose 1-diphosphate: step 4/9. It participates in amino-acid biosynthesis; L-tryptophan biosynthesis; L-tryptophan from chorismate: step 3/5. In terms of biological role, catalyzes the isomerization of the aminoaldose moiety of ProFAR to the aminoketose of PRFAR in the biosynthesis pathway for histidine and the isomerization of the aminoaldose PRA to the aminoketose CdRP in the biosynthsis pathway for tryptophan. The sequence is that of Phosphoribosyl isomerase A (priA) from Streptomyces coelicolor (strain ATCC BAA-471 / A3(2) / M145).